Consider the following 404-residue polypeptide: Propionate kinase (404 aa).

Belongs to the acetokinase family. PduW subfamily.

It is found in the cytoplasm. The enzyme catalyses propanoate + ATP = propanoyl phosphate + ADP. It participates in polyol metabolism; 1,2-propanediol degradation. Its function is as follows. Works with phosphate acetyltransferase (pta) to capture exogenous propionate and regenerate propionyl-CoA during degradation of 1,2-propanediol (1,2-PD). The polypeptide is Propionate kinase (Escherichia fergusonii (strain ATCC 35469 / DSM 13698 / CCUG 18766 / IAM 14443 / JCM 21226 / LMG 7866 / NBRC 102419 / NCTC 12128 / CDC 0568-73)).